Here is a 311-residue protein sequence, read N- to C-terminus: MKVTIVGAGNVGATCADVISYRGIASEVVLLDIKEGFAEGKALDITQCATNTGFNTKVSGVTNDYSKTAGSDVVVITSGIPRKPGMTREELIGINAGIVKTVAENVLKYSPNTIIVVVSNPMDTMTYLALKATGLPKNRIIGMGGALDSSRFRTYLSLALDKPANDISAMVIGGHGDTTMIPLTRLASYNGIPVSQFLSEDVLQKVAADTMVGGATLTGLLGTSAWYAPGASVAYLVDSILNDQKKMIACSVFVEGEYGQNDICIGVPCIIGKNGVEEIVNINLNDQEKALFAKSADAVRGMNDALKSILV.

NAD(+) contacts are provided by residues 7 to 12 (GAGNVG) and aspartate 32. Substrate-binding residues include arginine 82 and arginine 88. Residues asparagine 95 and 118-120 (VSN) contribute to the NAD(+) site. Residues asparagine 120 and arginine 151 each contribute to the substrate site. The Proton acceptor role is filled by histidine 175.

Belongs to the LDH/MDH superfamily. MDH type 3 family.

The catalysed reaction is (S)-malate + NAD(+) = oxaloacetate + NADH + H(+). Its function is as follows. Catalyzes the reversible oxidation of malate to oxaloacetate. This chain is Malate dehydrogenase, found in Flavobacterium johnsoniae (strain ATCC 17061 / DSM 2064 / JCM 8514 / BCRC 14874 / CCUG 350202 / NBRC 14942 / NCIMB 11054 / UW101) (Cytophaga johnsonae).